The primary structure comprises 259 residues: Flagellar L-ring protein 1 (259 aa).

The N-terminal stretch at 1-15 is a signal peptide; sequence MKRICLLALITTMSG. Cysteine 16 carries N-palmitoyl cysteine lipidation. Cysteine 16 carries the S-diacylglycerol cysteine lipid modification. The segment at 38–63 is disordered; that stretch reads EGDKSKDESSGIVDTLRGRNDPVAGD.

The protein belongs to the FlgH family. As to quaternary structure, the basal body constitutes a major portion of the flagellar organelle and consists of four rings (L,P,S, and M) mounted on a central rod.

Its subcellular location is the cell outer membrane. The protein resides in the bacterial flagellum basal body. In terms of biological role, assembles around the rod to form the L-ring and probably protects the motor/basal body from shearing forces during rotation. The sequence is that of Flagellar L-ring protein 1 (flgH1) from Vibrio parahaemolyticus serotype O3:K6 (strain RIMD 2210633).